The sequence spans 244 residues: Venom nerve growth factor 2 (244 aa).

The signal sequence occupies residues 1 to 18; it reads MSMLCYTLIIAFLIGTWA. The propeptide occupies 19–125; sequence APKSEDNVPL…TLNRNIRAKR (107 aa). The segment covering 47-66 has biased composition (basic and acidic residues); it reads GLKTSRNTDQRHPAPKKAED. Positions 47-67 are disordered; it reads GLKTSRNTDQRHPAPKKAEDQ. 3 cysteine pairs are disulfide-bonded: Cys-139–Cys-205, Cys-181–Cys-233, and Cys-193–Cys-235.

It belongs to the NGF-beta family. Homodimer; non-covalently linked. Expressed by the venom gland.

It localises to the secreted. Nerve growth factor is important for the development and maintenance of the sympathetic and sensory nervous systems. It stimulates division and differentiation of sympathetic and embryonic sensory neurons as well as basal forebrain cholinergic neurons in the brain. Its relevance in the snake venom is not clear. However, it has been shown to inhibit metalloproteinase-dependent proteolysis of platelet glycoprotein Ib alpha, suggesting a metalloproteinase inhibition to prevent metalloprotease autodigestion and/or protection against prey proteases. Binds a lipid between the two protein chains in the homodimer. The lipid-bound form promotes histamine relase from mouse mast cells, contrary to the lipid-free form. In Tropidechis carinatus (Australian rough-scaled snake), this protein is Venom nerve growth factor 2.